A 174-amino-acid polypeptide reads, in one-letter code: Ribosome maturation factor RimM (174 aa).

In terms of domain architecture, PRC barrel spans Lys-96 to Leu-169.

It belongs to the RimM family. As to quaternary structure, binds ribosomal protein uS19.

Its subcellular location is the cytoplasm. An accessory protein needed during the final step in the assembly of 30S ribosomal subunit, possibly for assembly of the head region. Essential for efficient processing of 16S rRNA. May be needed both before and after RbfA during the maturation of 16S rRNA. It has affinity for free ribosomal 30S subunits but not for 70S ribosomes. This Acetivibrio thermocellus (strain ATCC 27405 / DSM 1237 / JCM 9322 / NBRC 103400 / NCIMB 10682 / NRRL B-4536 / VPI 7372) (Clostridium thermocellum) protein is Ribosome maturation factor RimM.